A 339-amino-acid polypeptide reads, in one-letter code: MFYKIAQKVMFQMDPERAHHLAIGSLKMTANSPLTCLYGQTIAPAPVSVMGLTFPNPVGLAAGMDKDGESIDAFHAMGFGHVEVGTVTPRPQPGNDLPRLFRLKPAKGIINRMGFNNKGVDNLVKNLIAKKTNIMVGVNIGKNKDTPVEQGKDDYLICMDKVYLHAAYIAVNISSPNTPGLRSLQYGDLLDELLSAIKTKQLELAEKHKKYVPIALKIAPDLTIEEIENIAQALIKNKFDGAIATNTTLTRDGVSGLANANESGGLSGKPLTELSTKVIKQLAICLKGQIPIIGVGGINSAEDALAKFDAGATMVQIYSGFIYQGPKLIKEIVNAYRLK.

Residues 62-66 and Thr-86 each bind FMN; that span reads AGMDK. Residue Lys-66 coordinates substrate. 111–115 lines the substrate pocket; the sequence is NRMGF. FMN is bound by residues Asn-139 and Asn-172. Asn-172 contributes to the substrate binding site. The active-site Nucleophile is Ser-175. Asn-177 is a substrate binding site. Lys-217 and Thr-245 together coordinate FMN. Residue 246 to 247 coordinates substrate; the sequence is NT. FMN contacts are provided by residues Gly-268, Gly-297, and 318–319; that span reads YS.

This sequence belongs to the dihydroorotate dehydrogenase family. Type 2 subfamily. In terms of assembly, monomer. Requires FMN as cofactor.

It localises to the cell membrane. The enzyme catalyses (S)-dihydroorotate + a quinone = orotate + a quinol. It participates in pyrimidine metabolism; UMP biosynthesis via de novo pathway; orotate from (S)-dihydroorotate (quinone route): step 1/1. Catalyzes the conversion of dihydroorotate to orotate with quinone as electron acceptor. The protein is Dihydroorotate dehydrogenase (quinone) of Shewanella baltica (strain OS185).